A 690-amino-acid polypeptide reads, in one-letter code: Elongation factor G (690 aa).

Residues 8–283 (EDYRNFGIMA…AVVDYLPSPV (276 aa)) form the tr-type G domain. GTP is bound by residues 17 to 24 (AHIDAGKT), 81 to 85 (DTPGH), and 135 to 138 (NKMD).

This sequence belongs to the TRAFAC class translation factor GTPase superfamily. Classic translation factor GTPase family. EF-G/EF-2 subfamily.

Its subcellular location is the cytoplasm. Its function is as follows. Catalyzes the GTP-dependent ribosomal translocation step during translation elongation. During this step, the ribosome changes from the pre-translocational (PRE) to the post-translocational (POST) state as the newly formed A-site-bound peptidyl-tRNA and P-site-bound deacylated tRNA move to the P and E sites, respectively. Catalyzes the coordinated movement of the two tRNA molecules, the mRNA and conformational changes in the ribosome. The polypeptide is Elongation factor G (Rhodopseudomonas palustris (strain HaA2)).